A 683-amino-acid chain; its full sequence is MSPTEMISQENYEPGICKIDPWLKPFAPAIKRRLESYKKWVKEINQNEGGYDKFSRGYERFGLNVLPNGDIIYREWAPNAVAASLIGEFNDWDRSKHPMKKDSFGVWEVHIPAKNGIPTIPHNTKIKISMTTPEGECIDRLPAWIKRVTQDLNVSLAYDAIFWNPPQKYQWKNNSPKKPTSLRIYEAHVGISTNEGRVGTYNEFTDNVLKRIKDLGYNAIQLMAIMEHAYYASFGYQVTSFFGVSSRYGTPEELMRLIDTAHGMGLYVLLDVVHSHACKNVLDGLNMFDGSDHCYFHEGGKGRHDLWDSRLFNYGHWEVLRFLLSNLRFFMEEYRFDGFRFDGVTSMMYHHHGIGTGFSGGYHEYFGDTVDEGGVVYLMLANDMLHKLYPRIITVSEDVSGMPGLCLPVEEGGIGFDYRLAMAIPDMWIKLLKEQRDDDWDMGNICWTLTNRRHMEKTIAYAESHDQALVGDKTLAFWLMDKEMYTHMSDMTPLTPIIDRGLALHKMIRLLTHGLGGEGYLNFEGNEFGHPEWLDFPRAGNNNSFHYARRQWNVVDDDLLRYKYLNEFDKAMQHLEEQYGWLSSPQAYISLKHNENKLVAFERGNLLWIFNFHPTQSFADYKIGTEWAGKYSIALNTDRKIFGGHDRIDESISYHSQPHEWDGRKNYIQVYIPCRVALVLSHC.

The (1,4-alpha-D-glucosyl)n site is built by W92 and K127. The active-site Nucleophile is D342. The Proton donor role is filled by E397.

The protein belongs to the glycosyl hydrolase 13 family. GlgB subfamily.

It localises to the cytoplasm. It carries out the reaction Transfers a segment of a (1-&gt;4)-alpha-D-glucan chain to a primary hydroxy group in a similar glucan chain.. Its pathway is glycan biosynthesis; glycogen biosynthesis. Glycogen-branching enzyme participates in the glycogen biosynthetic process along with glycogenin and glycogen synthase. Generates alpha-1,6-glucosidic branches from alpha-1,4-linked glucose chains, to increase solubility of the glycogen polymer. This is 1,4-alpha-glucan-branching enzyme (GLC3) from Rhizophagus irregularis (strain DAOM 181602 / DAOM 197198 / MUCL 43194) (Arbuscular mycorrhizal fungus).